The chain runs to 251 residues: LexA repressor (251 aa).

Residues 26-46 (FDEMKDALGLKSKSGIHRLIK) constitute a DNA-binding region (H-T-H motif). Catalysis depends on for autocatalytic cleavage activity residues S172 and K210.

This sequence belongs to the peptidase S24 family. Homodimer.

The enzyme catalyses Hydrolysis of Ala-|-Gly bond in repressor LexA.. Represses a number of genes involved in the response to DNA damage (SOS response), including recA and lexA. In the presence of single-stranded DNA, RecA interacts with LexA causing an autocatalytic cleavage which disrupts the DNA-binding part of LexA, leading to derepression of the SOS regulon and eventually DNA repair. This chain is LexA repressor, found in Rhodospirillum rubrum (strain ATCC 11170 / ATH 1.1.1 / DSM 467 / LMG 4362 / NCIMB 8255 / S1).